Here is a 275-residue protein sequence, read N- to C-terminus: Elongation factor Ts (275 aa).

The tract at residues threonine 76–valine 79 is involved in Mg(2+) ion dislocation from EF-Tu.

Belongs to the EF-Ts family.

It localises to the cytoplasm. Its function is as follows. Associates with the EF-Tu.GDP complex and induces the exchange of GDP to GTP. It remains bound to the aminoacyl-tRNA.EF-Tu.GTP complex up to the GTP hydrolysis stage on the ribosome. This is Elongation factor Ts from Corynebacterium glutamicum (strain R).